The chain runs to 385 residues: Probable endopeptidase MT2245 (385 aa).

Residues 235-257 are compositionally biased toward pro residues; that stretch reads AALPPGAPPGDGPAPGVAPPPGG. Positions 235–268 are disordered; it reads AALPPGAPPGDGPAPGVAPPPGGMPGLPFVQPDG. In terms of domain architecture, NlpC/P60 spans 270–385; the sequence is GGDRTAVVQA…SGPIYDARRY (116 aa). Cysteine 300 (nucleophile) is an active-site residue. Histidine 348 (proton acceptor) is an active-site residue. Histidine 360 is a catalytic residue.

The protein belongs to the peptidase C40 family.

This is Probable endopeptidase MT2245 from Mycobacterium tuberculosis (strain CDC 1551 / Oshkosh).